Consider the following 258-residue polypeptide: MLLIPISSSSSSSISPPPNSYPSNHHSLFFSNLTFPIQHGSRKLKTLRLRANFWESIRSGFVKNNNSTQLVEPPSIVNDEEEETEPLLPVEFTLVERNLEDGLVEEIIFSSGGEIDVYDLQGLCDKVGWPRRPLVKLAAALKNSYMVATLHSVMKSSSDSDSSEGGDGEKQQEKKLIGMARATSDHAFNATIWDVLVDPEYQGQGLGKALVEKLVRALLQRDIGNISLFADSQVVDFYQNLGFEADPEGIKGMFWYPK.

Residues 1–58 (MLLIPISSSSSSSISPPPNSYPSNHHSLFFSNLTFPIQHGSRKLKTLRLRANFWESIR) constitute a chloroplast transit peptide. The segment at 107 to 194 (IIFSSGGEID…DHAFNATIWD (88 aa)) is interaction with begomoviruses NSP protein. The N-acetyltransferase domain maps to 107–258 (IIFSSGGEID…GIKGMFWYPK (152 aa)). Acetyl-CoA contacts are provided by residues 195-197 (VLV), 203-208 (GQGLGK), 231-233 (DSQ), and tyrosine 238. The Proton donor role is filled by tyrosine 238.

Belongs to the acetyltransferase family. GNAT subfamily. Oligomer. Interacts with begomoviruses NSP but not with CP. This interaction may allow NSP to recruit NSI monomers to acetylate viral genome-bound CP and thus regulate nuclear export of viral genome by NSP. Post-translationally, S-sulfhydrated and activated by hydrogen sulfide H(2)S to promote melatonin accumulation and subsequent melatonin-dependent stomotal closure to combat osmotic stress. In terms of processing, autoacetylated. As to expression, highly expressed in cauline leaves and seeds, at lower levels in stems, siliques, inflorescences and rosettes leaves and at very low levels in roots. Expressed in the xylem parenchyma and phloem of the leaves and root, and in guard cells of young leaves.

It localises to the plastid. Its subcellular location is the chloroplast. The catalysed reaction is 5-methoxytryptamine + acetyl-CoA = melatonin + CoA + H(+). It carries out the reaction L-lysyl-[histone] + acetyl-CoA = N(6)-acetyl-L-lysyl-[histone] + CoA + H(+). It catalyses the reaction L-lysyl-[protein] + acetyl-CoA = N(6)-acetyl-L-lysyl-[protein] + CoA + H(+). The enzyme catalyses serotonin + acetyl-CoA = N-acetylserotonin + CoA + H(+). The catalysed reaction is N-terminal L-alanyl-[protein] + acetyl-CoA = N-terminal N(alpha)-acetyl-L-alanyl-[protein] + CoA + H(+). It carries out the reaction N-terminal L-seryl-[protein] + acetyl-CoA = N-terminal N(alpha)-acetyl-L-seryl-[protein] + CoA + H(+). It catalyses the reaction N-terminal L-valyl-[protein] + acetyl-CoA = N-terminal N(alpha)-acetyl-L-valyl-[protein] + CoA + H(+). The enzyme catalyses N-terminal glycyl-[protein] + acetyl-CoA = N-terminal N(alpha)-acetylglycyl-[protein] + CoA + H(+). The catalysed reaction is an N-terminal L-alpha-aminoacyl-[protein] + acetyl-CoA = N-terminal N(alpha)-acetyl-L-alpha-aminoacyl-[protein] + CoA + H(+). It carries out the reaction N-terminal L-threonyl-[protein] + acetyl-CoA = N-terminal N(alpha)-acetyl-L-threonyl-[protein] + CoA + H(+). It catalyses the reaction N-terminal L-methionyl-[protein] + acetyl-CoA = N-terminal N(alpha)-acetyl-L-methionyl-[protein] + CoA + H(+). The enzyme catalyses N-terminal L-leucyl-[protein] + acetyl-CoA = N-terminal N(alpha)-acetyl-L-leucyl-[protein] + CoA + H(+). Its activity is regulated as follows. Inhibited by the viral nuclear shuttle protein (NSP) that binds to the region required for oligomerization. Protein acetyltransferase with dual specificity triggering both N-alpha-acetylation (NTA), with a preference for alanine, serine, threonine, methionine and to a lower extent valine as substrates (can also use glycine and leucine), and epsilon-lysine acetylation (KA) of several plastid proteins. Triggers lysine acetylation in KEA1 and KEA2. Acetylates in vitro histones H2A and H3. Does not act as a transcriptional activator but required for the dynamic reorganization of thylakoid protein complexes and grana during photosynthetic state transitions. Involved in melatonin biosynthesis by catalyzing the formation of N-acetylserotonin (NAS) from serotonin and of melatonin (N-acetyl-5-methoxytryptamine) from 5-methoxytryptamine (5-MT). By triggering melatonin biosynthesis, contributes to the chloroplast protein quality control (CPQC), which plays a pivotal role in starch synthesis, and confers melatonin-associated tolerance to high light (HL) stress. Prevents the accumulation of oil and anthocyanin content in mature seeds and avoids seed germination in a melatonin-dependent manner, but promotes mucilage production in the seed coat. Contributes to melatonin-mediated anthocyanin production in cold-exposed seedlings. Implicated in melatonin-monitored circadian dynamics of stomatal aperture to minimize night water loss and promote drought tolerance, partly by triggering hydrogen sulfide H(2)S-dependent stomotal closure in response to osmotic stress. In terms of biological role, (Microbial infection) Required for begomovirus infection and systemic spread. In case of begomoviruses infection, acetylates the capsid protein (CP), but not the nuclear shuttle protein (NSP). Stimulates melatonin-triggered defense responses to the necrotrophic Botrytis cinerea. The polypeptide is GCN5-related N-acetyltransferase 2, chloroplastic (Arabidopsis thaliana (Mouse-ear cress)).